A 272-amino-acid chain; its full sequence is Putative hydro-lyase RPD_1846 (272 aa).

The protein belongs to the D-glutamate cyclase family.

This chain is Putative hydro-lyase RPD_1846, found in Rhodopseudomonas palustris (strain BisB5).